The following is a 230-amino-acid chain: DNA mismatch repair protein MutH (230 aa).

This sequence belongs to the MutH family.

Its subcellular location is the cytoplasm. Functionally, sequence-specific endonuclease that cleaves unmethylated GATC sequences. It is involved in DNA mismatch repair. The protein is DNA mismatch repair protein MutH of Enterobacter sp. (strain 638).